The following is a 1383-amino-acid chain: Negative regulator of sporulation MDS3 (1383 aa).

3 Kelch repeats span residues 124 to 179, 199 to 246, and 356 to 402; these read CLYL…SPRF, GLFI…KDKE, and QNVV…WGGF. Polar residues predominate over residues 450 to 460; sequence GRSNNRTSSFV. 7 disordered regions span residues 450–506, 625–644, 653–825, 858–884, 1063–1114, 1251–1289, and 1321–1369; these read GRSN…VLDA, NQRL…DIPK, LLSS…DLFS, LDSF…SDES, NNSR…VDKE, QLKE…RLPQ, and SMTD…KSSS. Over residues 631–644 the composition is skewed to low complexity; it reads KSSNSESSSSDIPK. The segment covering 693-707 has biased composition (basic and acidic residues); sequence VNREEGSDCSKDRKT. Low complexity-rich tracts occupy residues 726–758, 803–815, and 858–874; these read NSTS…EQIP, ESPF…SMSG, and LDSF…VSSV. Residues 1084–1094 show a composition bias toward basic and acidic residues; that stretch reads EGEKQEEIVSK. Low complexity predominate over residues 1251–1280; that stretch reads QLKESQLQSKSSPIIPTVSTVTPSPLPSIS. Residues 1341 to 1352 are compositionally biased toward polar residues; that stretch reads LQQTMLSRTPTN.

In terms of assembly, interacts with SIT4.

It localises to the cytoplasm. Functionally, negatively regulates early sporulation-specific genes. TOR signaling pathway component that contributes to morphogenesis as a regulator of this key morphogenetic pathway. Required for growth and hyphal formation at pH 9, for full virulence in a mouse model of systemic infection and for biofilm formation. Involved in chlamydospore formation, distinctive morphological feature of the fungal pathogen C.albicans that can be induced to form in oxygen-limited environments and has been reported in clinical specimens. The sequence is that of Negative regulator of sporulation MDS3 (MDS3) from Candida albicans (strain SC5314 / ATCC MYA-2876) (Yeast).